The primary structure comprises 504 residues: Endosomal/lysosomal proton channel TMEM175 (504 aa).

Positions 1 to 27 (MSQPRTPEQALDTPGDCPPGRRDEDAG) are disordered. At 1–33 (MSQPRTPEQALDTPGDCPPGRRDEDAGEGIQCS) the chain is on the cytoplasmic side. Threonine 6 bears the Phosphothreonine mark. Residues 34 to 56 (QRMLSFSDALLSIIATVMILPVT) traverse the membrane as a helical segment. The short motif at 35–41 (RMLSFSD) is the RxxxFSD motif 1 element. Over 57 to 77 (HTEISPEQQFDRSVQRLLATR) the chain is Lumenal. Residues 58–63 (TEISPE) are short helix H1-1. A short helix H2-1 region spans residues 65 to 71 (QFDRSVQ). A helical transmembrane segment spans residues 78 to 100 (IAVYLMTFLIVTVAWAAHTRLFQ). The Cytoplasmic portion of the chain corresponds to 101-106 (VVGKTD). The helical transmembrane segment at 107–128 (DTLALLNLACMMTITFLPYTFS) threads the bilayer. Residues 129 to 138 (LMVTFPDVPL) are Lumenal-facing. The chain crosses the membrane as a helical span at residues 139-160 (GIFLFCVCVIAIGVVQALIVGY). At 161 to 184 (AFHFPHLLSPQIQRSAHRALYRRH) the chain is on the cytoplasmic side. The helical transmembrane segment at 185-205 (VLGIVLQGPALCFAAAIFSLF) threads the bilayer. Residues 206–210 (FVPLS) lie on the Lumenal side of the membrane. The helical transmembrane segment at 211 to 230 (YLLMVTVILLPYVSKVTGWC) threads the bilayer. The Cytoplasmic segment spans residues 231–257 (RDRLLGHREPSAHPVEVFSFDLHEPLS). A helical transmembrane segment spans residues 258-282 (KERVEAFSDGVYAIVATLLILDICE). The RxxxFSD motif 2 signature appears at 260–266 (RVEAFSD). The Lumenal portion of the chain corresponds to 283 to 309 (DNVPDPKDVKERFSGSLVAALSATGPR). Positions 288–296 (PKDVKERFS) are short helix H1-2. A short helix H2-2 region spans residues 298–304 (SLVAALS). A helical transmembrane segment spans residues 310-332 (FLAYFGSFATVGLLWFAHHSLFL). The Cytoplasmic segment spans residues 333–338 (HVRKAT). A helical transmembrane segment spans residues 339 to 360 (RAMGLLNTLSLAFVGGLPLAYQ). The Lumenal portion of the chain corresponds to 361-375 (QTSAFARQPRDELER). A helical transmembrane segment spans residues 376–396 (VRVSCTIIFLASIFQLAMWTT). Residues 397 to 416 (ALLHQAETLQPSVWFGGREH) are Cytoplasmic-facing. A helical membrane pass occupies residues 417-440 (VLMFAKLALYPCASLLAFASTCLL). The Lumenal segment spans residues 441 to 442 (SR). Residues 443–469 (FSVGIFHLMQIAVPCAFLLLRLLVGLA) form a helical membrane-spanning segment. Topologically, residues 470 to 504 (LATLRVLRGLARPEHPPPAPTGQDDPQSQLLPAPC) are cytoplasmic. A disordered region spans residues 483–504 (EHPPPAPTGQDDPQSQLLPAPC). Residues 493–504 (DDPQSQLLPAPC) are compositionally biased toward polar residues.

The protein belongs to the TMEM175 family. Homodimer. Interacts with AKT (AKT1, AKT2 or AKT3); leading to formation of the lysoK(GF) complex, which activates the channel. Interacts with LAMP1; inhibiting the proton channel activity of TMEM175. Interacts with LAMP2; inhibiting the proton channel activity of TMEM175. Widely expressed.

It localises to the endosome membrane. It is found in the lysosome membrane. The catalysed reaction is H(+)(in) = H(+)(out). The enzyme catalyses K(+)(in) = K(+)(out). Its activity is regulated as follows. Active at low pH (under pH 4.6): proton channel activity is activated by luminal side protons. Polyunsaturated fatty acids, such as arachidonic acid, also activate the channel activity. Proton channel activity is directly inhibited by LAMP1 or LAMP2, facilitating lysosomal acidification. Channel activity is activated following interaction with AKT (AKT1, AKT2 or AKT3): interaction promotes activation from closed to an open state. Activation by AKT is independent of AKT serine/threonine-protein kinase activity. Proton-activated proton channel that catalyzes proton efflux from endosomes and lysosomes to maintain a steady-state pH. Activated at low pH (under pH 4.6) by luminal side protons: selectively mediates lysosomal proton release from lysosomes, eliciting a proton leak that balances V-ATPase activity to maintain pH homeostasis. Regulation of lumenal pH stability is required for autophagosome-lysosome fusion. Also acts as a potassium channel at higher pH, regulating potassium conductance in endosomes and lysosomes. Constitutes the pore-forming subunit of the lysoK(GF) complex, a complex activated by extracellular growth factors. The lysoK(GF) complex is composed of TMEM175 and AKT (AKT1, AKT2 or AKT3), a major target of growth factor receptors: in the complex, TMEM175 channel is opened by conformational changes by AKT, leading to its activation. The lysoK(GF) complex is required to protect neurons against stress-induced damage. The polypeptide is Endosomal/lysosomal proton channel TMEM175 (Homo sapiens (Human)).